Here is a 318-residue protein sequence, read N- to C-terminus: Acetaldehyde dehydrogenase 1 (318 aa).

15-18 provides a ligand contact to NAD(+); the sequence is SGNI. The active-site Acyl-thioester intermediate is Cys-133. NAD(+) is bound by residues 164 to 172 and Asn-289; that span reads SAGPGTRAN.

It belongs to the acetaldehyde dehydrogenase family.

It catalyses the reaction acetaldehyde + NAD(+) + CoA = acetyl-CoA + NADH + H(+). The chain is Acetaldehyde dehydrogenase 1 (xylQ) from Azotobacter vinelandii (strain DJ / ATCC BAA-1303).